We begin with the raw amino-acid sequence, 199 residues long: MSPEDWLQAEMQGEIVALVHSHPGGLPWLSEADRRLQVQSDLPWWLVCRGTIHKFRCVPHLTGRRFEHGVTDCYTLFRDAYHLAGIEMPDFHREDDWWRNGQNLYLDNLEATGLYQVPLSAAQPGDVLLCCFGSSVPNHAAIYCGDGELLHHIPEQLSKRERYTDKWQRRTHSLWRHRAWRASAFTGIYNDLVAASTFV.

One can recognise an MPN domain in the interval 1–77 (MSPEDWLQAE…HGVTDCYTLF (77 aa)). Residues histidine 20, histidine 22, and aspartate 33 each coordinate Zn(2+). The JAMM motif motif lies at 20-33 (HSHPGGLPWLSEAD). The 147-residue stretch at 40 to 186 (SDLPWWLVCR…HRAWRASAFT (147 aa)) folds into the NlpC/P60 domain. Cysteine 73 functions as the Nucleophile in the catalytic mechanism. The active-site Proton acceptor is histidine 139. Residue histidine 151 is part of the active site.

The protein belongs to the peptidase C40 family.

The protein resides in the host cytoplasm. Functionally, plays a role in tail tip complex assembly. The tail tip complex is assembled successively with three tail tip proteins J, one tail tip protein I, one tail tip protein L and one tail tip protein K. The tail tip complex interacts with tail measure protein to initiate tail tube assembly. The formation of the tail tip complex is completed by the addition of tail tip protein M, which is followed by tail tube polymerization. May be excluded form tail tip during maturation and would be absent from virions. May be involved in tail measure protein processing. This is Tail tip assembly protein K (K) from Escherichia phage lambda (Bacteriophage lambda).